The sequence spans 25 residues: Pancreatic triacylglycerol lipase (25 aa).

A disulfide bridge links Cys-4 with Cys-10.

Belongs to the AB hydrolase superfamily. Lipase family. In terms of assembly, forms a 1:1 stoichiometric complex with (pro)colipase/CLPS.

It is found in the secreted. The enzyme catalyses a triacylglycerol + H2O = a diacylglycerol + a fatty acid + H(+). It catalyses the reaction 1,2,3-tributanoylglycerol + H2O = dibutanoylglycerol + butanoate + H(+). It carries out the reaction 1,2,3-tri-(9Z-octadecenoyl)-glycerol + H2O = di-(9Z)-octadecenoylglycerol + (9Z)-octadecenoate + H(+). The catalysed reaction is all-trans-retinyl hexadecanoate + H2O = all-trans-retinol + hexadecanoate + H(+). The enzyme catalyses 1,2-di-(9Z-octadecenoyl)-glycerol + H2O = (9Z-octadecenoyl)-glycerol + (9Z)-octadecenoate + H(+). Inhibited by bile salts, is reactivated by (pro)colipase/CLPS. Functionally, plays an important role in fat metabolism. It preferentially splits the esters of long-chain fatty acids at positions 1 and 3, producing mainly 2-monoacylglycerol and free fatty acids, and shows considerably higher activity against insoluble emulsified substrates than against soluble ones. This Felis catus (Cat) protein is Pancreatic triacylglycerol lipase (PNLIP).